The sequence spans 306 residues: Putative beta-lactamase HcpD (306 aa).

The signal sequence occupies residues 1 to 25; sequence MIKSWTKKWFLILFLMASCSSYLVA. TPR repeat units lie at residues 28 to 61, 96 to 133, 168 to 205, and 240 to 277; these read GEKY…RVGV, HLAC…KGGV, GISC…KDGA, and GSGC…GFSG. Disulfide bonds link cysteine 55–cysteine 63, cysteine 91–cysteine 99, cysteine 127–cysteine 135, cysteine 163–cysteine 171, cysteine 199–cysteine 207, cysteine 235–cysteine 243, and cysteine 271–cysteine 279.

It belongs to the hcp beta-lactamase family.

The protein localises to the secreted. It catalyses the reaction a beta-lactam + H2O = a substituted beta-amino acid. Functionally, may hydrolyze 6-aminopenicillinic acid and 7-aminocephalosporanic acid (ACA) derivatives. Binds to penicillin. This is Putative beta-lactamase HcpD (hcpD) from Helicobacter pylori (strain ATCC 700392 / 26695) (Campylobacter pylori).